Reading from the N-terminus, the 912-residue chain is Protein translocase subunit SecA (912 aa).

ATP contacts are provided by residues glutamine 87, 105–109 (GEGKT), and aspartate 509. The span at 847-859 (RERAVSQPVHEDA) shows a compositional bias: basic and acidic residues. The disordered stretch occupies residues 847–912 (RERAVSQPVH…KYKHCHGKLN (66 aa)). Residues 867–878 (AESEEASGESAD) are compositionally biased toward acidic residues. Positions 881-892 (QPVRRDGPKVGR) are enriched in basic and acidic residues. Cysteine 896, cysteine 898, cysteine 907, and histidine 908 together coordinate Zn(2+). Over residues 902 to 912 (KKYKHCHGKLN) the composition is skewed to basic residues.

Belongs to the SecA family. Monomer and homodimer. Part of the essential Sec protein translocation apparatus which comprises SecA, SecYEG and auxiliary proteins SecDF-YajC and YidC. It depends on Zn(2+) as a cofactor.

The protein localises to the cell inner membrane. Its subcellular location is the cytoplasm. It catalyses the reaction ATP + H2O + cellular proteinSide 1 = ADP + phosphate + cellular proteinSide 2.. Part of the Sec protein translocase complex. Interacts with the SecYEG preprotein conducting channel. Has a central role in coupling the hydrolysis of ATP to the transfer of proteins into and across the cell membrane, serving both as a receptor for the preprotein-SecB complex and as an ATP-driven molecular motor driving the stepwise translocation of polypeptide chains across the membrane. In Chromohalobacter salexigens (strain ATCC BAA-138 / DSM 3043 / CIP 106854 / NCIMB 13768 / 1H11), this protein is Protein translocase subunit SecA.